The sequence spans 599 residues: Microtubule-associated protein 70-2 (599 aa).

A disordered region spans residues 1–30; it reads MADGGGGEEGSASALRGSARRRGAVQPAGL. The stretch at 43 to 349 forms a coiled coil; sequence DPVKVELNRL…ARSEAQLKEK (307 aa). Residues 227-460 are required for targeting to microtubules; it reads ILDRLHRQKV…HLLNRSTDAV (234 aa). 2 disordered regions span residues 357 to 453 and 557 to 599; these read LEDG…PHLL and AMRL…RNLQ. Over residues 404 to 420 the composition is skewed to low complexity; the sequence is RRSPSFNSRSSLSTSSS. A coiled-coil region spans residues 533 to 570; the sequence is LTKAMEVEAKKMRREVAAMEKEVAAMRLDKDQENKAKR. Residues 557–568 are compositionally biased toward basic and acidic residues; that stretch reads AMRLDKDQENKA.

It belongs to the MAP70 family.

The protein resides in the cytoplasm. The protein localises to the cytoskeleton. Functionally, plant-specific protein that interact with microtubules. The protein is Microtubule-associated protein 70-2 (MAP70.2) of Oryza sativa subsp. japonica (Rice).